Consider the following 686-residue polypeptide: Envelope glycoprotein H (686 aa).

Residues 1 to 24 (MPASSVRLPLRLLTLAGLLALAGA) form the signal peptide. The Virion surface segment spans residues 25–646 (AALARGAPQG…TSTRLAPVSP (622 aa)). N-linked (GlcNAc...) asparagine; by host glycans are attached at residues Asn77, Asn162, Asn542, Asn604, and Asn627. Positions 157 to 217 (PAAVFNVTLG…PPAGRFHVYT (61 aa)) are interaction with gL. The chain crosses the membrane as a helical span at residues 647–667 (AYVVASVVGAAITVGILYALF). Residues 668–686 (KMLCSFSSEGYSRLINARS) lie on the Intravirion side of the membrane.

It belongs to the herpesviridae glycoprotein H family. As to quaternary structure, interacts with glycoprotein L (gL); this interaction is necessary for the correct processing and cell surface expression of gH. The heterodimer gH/gL seems to interact with gB trimers during fusion. N-glycosylated, O-glycosylated, and sialylated.

The protein resides in the virion membrane. It localises to the host cell membrane. It is found in the host endosome membrane. Functionally, the heterodimer glycoprotein H-glycoprotein L is required for the fusion of viral and plasma membranes leading to virus entry into the host cell. Following initial binding to host receptor, membrane fusion is mediated by the fusion machinery composed of gB and the heterodimer gH/gL. May also be involved in the fusion between the virion envelope and the outer nuclear membrane during virion morphogenesis. The chain is Envelope glycoprotein H from Sus scrofa (Pig).